The primary structure comprises 438 residues: V-type ATP synthase beta chain (438 aa).

This sequence belongs to the ATPase alpha/beta chains family.

Produces ATP from ADP in the presence of a proton gradient across the membrane. The V-type beta chain is a regulatory subunit. This is V-type ATP synthase beta chain from Chlamydia trachomatis serovar A (strain ATCC VR-571B / DSM 19440 / HAR-13).